We begin with the raw amino-acid sequence, 109 residues long: Nucleoid-associated protein BCE_0021 (109 aa).

Belongs to the YbaB/EbfC family. In terms of assembly, homodimer.

It localises to the cytoplasm. It is found in the nucleoid. Binds to DNA and alters its conformation. May be involved in regulation of gene expression, nucleoid organization and DNA protection. The sequence is that of Nucleoid-associated protein BCE_0021 from Bacillus cereus (strain ATCC 10987 / NRS 248).